Reading from the N-terminus, the 271-residue chain is MSYLQDDKPVTLFELGKMRAEGRKIAMLTCYDASFAALLERNGVDVLLVGDSLGNVLQGQKSTLPVTLEQMAYHTECVVRGSSRPFVVTDMPFGSYQESPEQAMRNAARLMAAGAEMVKLEGGAFMAETVRFLVERGVPVCAHIGLTPQSVHQLGGYRVQGRSEEGAARLKADALALEQAGAALVVLEMVPAAVASDITRSLSTMATIGIGAGADCSGQVLVLHDMIGVYPGKKARFVKNFMEGAASIDAAVAAYVAAVKDGSFPAAEHCY.

The Mg(2+) site is built by Asp-51 and Asp-90. 3-methyl-2-oxobutanoate contacts are provided by residues 51–52, Asp-90, and Lys-119; that span reads DS. Glu-121 is a binding site for Mg(2+). Glu-188 acts as the Proton acceptor in catalysis.

Belongs to the PanB family. As to quaternary structure, homodecamer; pentamer of dimers. The cofactor is Mg(2+).

The protein resides in the cytoplasm. It carries out the reaction 3-methyl-2-oxobutanoate + (6R)-5,10-methylene-5,6,7,8-tetrahydrofolate + H2O = 2-dehydropantoate + (6S)-5,6,7,8-tetrahydrofolate. Its pathway is cofactor biosynthesis; (R)-pantothenate biosynthesis; (R)-pantoate from 3-methyl-2-oxobutanoate: step 1/2. Functionally, catalyzes the reversible reaction in which hydroxymethyl group from 5,10-methylenetetrahydrofolate is transferred onto alpha-ketoisovalerate to form ketopantoate. This is 3-methyl-2-oxobutanoate hydroxymethyltransferase from Azoarcus sp. (strain BH72).